The primary structure comprises 240 residues: Anti-H(O) lectin (240 aa).

An N-linked (GlcNAc...) asparagine glycan is attached at N4. Mn(2+) contacts are provided by E124 and D126. Residues D126, Y128, N130, and D133 each contribute to the Ca(2+) site. Residues D133 and H141 each coordinate Mn(2+).

It belongs to the leguminous lectin family.

L-fucose specific lectin. This Lotus tetragonolobus (Winged pea) protein is Anti-H(O) lectin.